We begin with the raw amino-acid sequence, 160 residues long: UPF0260 protein Rleg2_0895 (160 aa).

It belongs to the UPF0260 family.

This Rhizobium leguminosarum bv. trifolii (strain WSM2304) protein is UPF0260 protein Rleg2_0895.